The chain runs to 239 residues: tRNA (guanine-N(7)-)-methyltransferase (239 aa).

Positions 69, 94, 121, and 144 each coordinate S-adenosyl-L-methionine. The active site involves Asp144. Lys148 is a binding site for substrate. Residues 150–155 form an interaction with RNA region; the sequence is RHNKRR. Substrate is bound by residues Asp180 and 217–220; that span reads TKFE.

It belongs to the class I-like SAM-binding methyltransferase superfamily. TrmB family. Monomer.

The catalysed reaction is guanosine(46) in tRNA + S-adenosyl-L-methionine = N(7)-methylguanosine(46) in tRNA + S-adenosyl-L-homocysteine. It participates in tRNA modification; N(7)-methylguanine-tRNA biosynthesis. Functionally, catalyzes the formation of N(7)-methylguanine at position 46 (m7G46) in tRNA. This is tRNA (guanine-N(7)-)-methyltransferase from Klebsiella pneumoniae subsp. pneumoniae (strain ATCC 700721 / MGH 78578).